The following is a 328-amino-acid chain: Alanine racemase (328 aa).

Catalysis depends on K33, which acts as the Proton acceptor; specific for D-alanine. The residue at position 33 (K33) is an N6-(pyridoxal phosphate)lysine. R118 is a binding site for substrate. Y237 acts as the Proton acceptor; specific for L-alanine in catalysis. M283 contributes to the substrate binding site.

Belongs to the alanine racemase family. Requires pyridoxal 5'-phosphate as cofactor.

It carries out the reaction L-alanine = D-alanine. It participates in amino-acid biosynthesis; D-alanine biosynthesis; D-alanine from L-alanine: step 1/1. Functionally, catalyzes the interconversion of L-alanine and D-alanine. May also act on other amino acids. The sequence is that of Alanine racemase (alr) from Campylobacter jejuni subsp. jejuni serotype O:23/36 (strain 81-176).